The sequence spans 109 residues: EPIDERMAL PATTERNING FACTOR-like protein 4 (109 aa).

The N-terminal stretch at 1–26 is a signal peptide; it reads MGTFRRRRRFLLAALVTFALLHLFSA. 3 disulfide bridges follow: Cys-66–Cys-100, Cys-70–Cys-76, and Cys-73–Cys-102.

The protein belongs to the plant cysteine rich small secretory peptide family. Epidermal patterning factor subfamily. Interacts with ERECTA. As to expression, expressed at the base of the apical meristem at 3 days after germination. Not detected in the hypocotyl. Expressed in developing stems soon after bolting, in inflorescence stems and in young siliques.

The protein localises to the secreted. Acts primarily as positive regulator of inflorescence growth. Endodermal expression is sufficient for proper inflorescence architecture. Redundantly involved with EPFL6 in procambial development regulation. Controls stomatal patterning. Mediates stomatal development inhibition. TMM (AC Q9SSD1) functions to dampen or block CLL2 signaling. Acts as a growth-regulatory ligand for ERECTA family receptors. The sequence is that of EPIDERMAL PATTERNING FACTOR-like protein 4 from Arabidopsis thaliana (Mouse-ear cress).